The primary structure comprises 358 residues: Transcription factor bHLH67 (358 aa).

Residues 125 to 176 (NMTLPSSTSSPLSAHSRRKRKINHLLPQEMTREKRKRRKTKPSKNNEEIENQ) form a disordered region. Low complexity predominate over residues 127–137 (TLPSSTSSPLS). Residues 157-166 (EKRKRRKTKP) are compositionally biased toward basic residues. Positions 175 to 226 (NQRINHIAVERNRRRQMNEHINSLRALLPPSYIQRGDQASIVGGAINYVKVL) constitute a bHLH domain.

As to quaternary structure, homodimer. In terms of tissue distribution, expressed constitutively in roots, leaves, stems, and flowers.

It localises to the nucleus. This chain is Transcription factor bHLH67 (BHLH67), found in Arabidopsis thaliana (Mouse-ear cress).